The chain runs to 161 residues: Transcriptional repressor NrdR (161 aa).

Over residues 1 to 11 (MRCPSCNSLDT) the composition is skewed to polar residues. Residues 1–20 (MRCPSCNSLDTQVKDSRPTE) form a disordered region. The segment at 3–34 (CPSCNSLDTQVKDSRPTEDSSVIRRRRVCVTC) is a zinc-finger region. The 91-residue stretch at 49–139 (LTVIKRNGRR…VYRNFREAKD (91 aa)) folds into the ATP-cone domain.

This sequence belongs to the NrdR family. It depends on Zn(2+) as a cofactor.

Negatively regulates transcription of bacterial ribonucleotide reductase nrd genes and operons by binding to NrdR-boxes. This is Transcriptional repressor NrdR from Bradyrhizobium sp. (strain ORS 278).